Reading from the N-terminus, the 294-residue chain is Small ribosomal subunit protein uS3 (294 aa).

Residues Val-39–Arg-107 form the KH type-2 domain. The interval Arg-210–Glu-294 is disordered. The span at Pro-219–Gly-238 shows a compositional bias: basic and acidic residues. Composition is skewed to low complexity over residues Arg-249–Ala-258 and Val-281–Glu-294.

It belongs to the universal ribosomal protein uS3 family. In terms of assembly, part of the 30S ribosomal subunit. Forms a tight complex with proteins S10 and S14.

Binds the lower part of the 30S subunit head. Binds mRNA in the 70S ribosome, positioning it for translation. The sequence is that of Small ribosomal subunit protein uS3 from Verminephrobacter eiseniae (strain EF01-2).